Here is a 184-residue protein sequence, read N- to C-terminus: ATP synthase subunit b, chloroplastic (184 aa).

Residues 27 to 49 (LATNPINLSVVLGVLIFFGKGVL) form a helical membrane-spanning segment.

This sequence belongs to the ATPase B chain family. F-type ATPases have 2 components, F(1) - the catalytic core - and F(0) - the membrane proton channel. F(1) has five subunits: alpha(3), beta(3), gamma(1), delta(1), epsilon(1). F(0) has four main subunits: a(1), b(1), b'(1) and c(10-14). The alpha and beta chains form an alternating ring which encloses part of the gamma chain. F(1) is attached to F(0) by a central stalk formed by the gamma and epsilon chains, while a peripheral stalk is formed by the delta, b and b' chains.

Its subcellular location is the plastid. The protein resides in the chloroplast thylakoid membrane. Its function is as follows. F(1)F(0) ATP synthase produces ATP from ADP in the presence of a proton or sodium gradient. F-type ATPases consist of two structural domains, F(1) containing the extramembraneous catalytic core and F(0) containing the membrane proton channel, linked together by a central stalk and a peripheral stalk. During catalysis, ATP synthesis in the catalytic domain of F(1) is coupled via a rotary mechanism of the central stalk subunits to proton translocation. In terms of biological role, component of the F(0) channel, it forms part of the peripheral stalk, linking F(1) to F(0). This Piper cenocladum (Ant piper) protein is ATP synthase subunit b, chloroplastic.